A 535-amino-acid chain; its full sequence is Sterol 26-hydroxylase, mitochondrial (535 aa).

The transit peptide at Met1 to Thr36 directs the protein to the mitochondrion. Lys286 carries the N6-acetyllysine modification. The interval Pro387–Pro401 is sterol-binding. Residue Cys480 coordinates heme. Lys524 bears the N6-acetyllysine mark.

The protein belongs to the cytochrome P450 family. As to quaternary structure, interacts with HSP70; this interaction is required for initial targeting to mitochondria. It depends on heme as a cofactor. In terms of tissue distribution, expressed in all tissues tested. Highest expression in liver and duodenum, followed by adrenal gland and lung. Low expression in kidney and spleen.

The protein localises to the mitochondrion inner membrane. The catalysed reaction is 5beta-cholestane-3alpha,7alpha,12alpha-triol + 6 reduced [adrenodoxin] + 3 O2 + 5 H(+) = (25R)-3alpha,7alpha,12alpha-trihydroxy-5beta-cholestan-26-oate + 6 oxidized [adrenodoxin] + 4 H2O. It carries out the reaction cholestanol + 2 reduced [adrenodoxin] + O2 + 2 H(+) = (25R)-26-hydroxycholestanol + 2 oxidized [adrenodoxin] + H2O. It catalyses the reaction (25R)-3beta-hydroxycholest-5-en-7-one-26-al + 2 reduced [adrenodoxin] + O2 + H(+) = (25R)-3beta-hydroxycholest-5-en-7-one-26-oate + 2 oxidized [adrenodoxin] + H2O. The enzyme catalyses (25R)-3beta,26-dihydroxycholest-5-en-7-one + 2 reduced [adrenodoxin] + O2 + 2 H(+) = (25R)-3beta-hydroxycholest-5-en-7-one-26-al + 2 oxidized [adrenodoxin] + 2 H2O. The catalysed reaction is 7-oxocholesterol + 2 reduced [adrenodoxin] + O2 + 2 H(+) = (25R)-3beta,26-dihydroxycholest-5-en-7-one + 2 oxidized [adrenodoxin] + H2O. It carries out the reaction calciol + 2 reduced [adrenodoxin] + O2 + 2 H(+) = calcidiol + 2 oxidized [adrenodoxin] + H2O. It catalyses the reaction (25R)-5beta-cholestane-3alpha,7alpha,12alpha,26-tetrol + 2 reduced [adrenodoxin] + O2 + 2 H(+) = (25R)-3alpha,7alpha,12alpha-trihydroxy-5beta-cholestan-26-al + 2 oxidized [adrenodoxin] + 2 H2O. The enzyme catalyses 2 reduced [adrenodoxin] + cholesterol + O2 + 2 H(+) = (25R)-cholest-5-ene-3beta,26-diol + 2 oxidized [adrenodoxin] + H2O. The catalysed reaction is (25R)-3beta,4beta-dihydroxycholest-5-en-26-al + 2 reduced [adrenodoxin] + O2 + H(+) = (25R)-3beta,4beta-dihydroxycholest-5-en-26-oate + 2 oxidized [adrenodoxin] + H2O. It carries out the reaction (25R)-4beta,26-dihydroxycholesterol + 2 reduced [adrenodoxin] + O2 + 2 H(+) = (25R)-3beta,4beta-dihydroxycholest-5-en-26-al + 2 oxidized [adrenodoxin] + 2 H2O. It catalyses the reaction 4beta-hydroxycholesterol + 2 reduced [adrenodoxin] + O2 + 2 H(+) = (25R)-4beta,26-dihydroxycholesterol + 2 oxidized [adrenodoxin] + H2O. The enzyme catalyses (25R)-3beta-hydroxy-5-cholesten-26-al + 2 reduced [adrenodoxin] + O2 + H(+) = (25R)-3beta-hydroxy-5-cholestenoate + 2 oxidized [adrenodoxin] + H2O. The catalysed reaction is (25R)-cholest-5-ene-3beta,26-diol + 2 reduced [adrenodoxin] + O2 + 2 H(+) = (25R)-3beta-hydroxy-5-cholesten-26-al + 2 oxidized [adrenodoxin] + 2 H2O. It carries out the reaction (25R)-3alpha,7alpha,12alpha-trihydroxy-5beta-cholestan-26-al + 2 reduced [adrenodoxin] + O2 + H(+) = (25R)-3alpha,7alpha,12alpha-trihydroxy-5beta-cholestan-26-oate + 2 oxidized [adrenodoxin] + H2O. It catalyses the reaction 5beta-cholestane-3alpha,7alpha,12alpha-triol + 2 reduced [adrenodoxin] + O2 + 2 H(+) = (25R)-5beta-cholestane-3alpha,7alpha,12alpha,26-tetrol + 2 oxidized [adrenodoxin] + H2O. It functions in the pathway hormone biosynthesis; cholecalciferol biosynthesis. Its pathway is steroid metabolism; cholesterol degradation. It participates in lipid metabolism; bile acid biosynthesis. Its function is as follows. Cytochrome P450 monooxygenase that catalyzes regio- and stereospecific hydroxylation of cholesterol and its derivatives. Hydroxylates (with R stereochemistry) the terminal methyl group of cholesterol side-chain in a three step reaction to yield at first a C26 alcohol, then a C26 aldehyde and finally a C26 acid. Regulates cholesterol homeostasis by catalyzing the conversion of excess cholesterol to bile acids via both the 'neutral' (classic) and the 'acid' (alternative) pathways. May also regulate cholesterol homeostasis via generation of active oxysterols, which act as ligands for NR1H2 and NR1H3 nuclear receptors, modulating the transcription of genes involved in lipid metabolism. Plays a role in cholestanol metabolism in the cerebellum. Similarly to cholesterol, hydroxylates cholestanol and may facilitate sterol diffusion through the blood-brain barrier to the systemic circulation for further degradation. Also hydroxylates retinal 7-ketocholesterol, a noxious oxysterol with pro-inflammatory and pro-apoptotic effects, and may play a role in its elimination from the retinal pigment epithelium. May play a redundant role in vitamin D biosynthesis. Catalyzes 25-hydroxylation of vitamin D3 that is required for its conversion to a functionally active form. The polypeptide is Sterol 26-hydroxylase, mitochondrial (CYP27A1) (Oryctolagus cuniculus (Rabbit)).